Here is a 1395-residue protein sequence, read N- to C-terminus: G-protein coupled receptor-associated sorting protein 1 (1395 aa).

Disordered regions lie at residues 1–25, 45–83, and 269–288; these read MTGA…VVGG, QIMP…AKAI, and TNTW…FRSK. Positions 269-281 are enriched in basic and acidic residues; sequence TNTWSGPREDPNS. Phosphoserine is present on S297. A disordered region spans residues 446 to 469; the sequence is SMGTGASSKSRPRTDGERIGDSLF. Positions 457 to 469 are enriched in basic and acidic residues; that stretch reads PRTDGERIGDSLF. Residues S631 and S899 each carry the phosphoserine modification. Residues 899-1395 are OPRD1-binding; it reads SETEEETIFG…QNDPEGDQEN (497 aa).

Belongs to the GPRASP family. Interacts with cytoplasmic tails of a variety of G-protein coupled receptors such as D2 dopamine receptor/DRD2, delta opioid receptor/OPRD1, beta-2 adrenergic receptor/ADRB2 and D4 dopamine receptor/DRD4. Interacts with PER1. Interacts with BECN2; the interaction is direct. As to expression, expressed in the brain, with lower expression in medulla, spinal cord and substantia nigra.

The protein resides in the cytoplasm. Modulates lysosomal sorting and functional down-regulation of a variety of G-protein coupled receptors. Targets receptors for degradation in lysosomes via its interaction with BECN2. The chain is G-protein coupled receptor-associated sorting protein 1 (GPRASP1) from Homo sapiens (Human).